The sequence spans 293 residues: tRNA pseudouridine synthase A (293 aa).

Aspartate 60 acts as the Nucleophile in catalysis. Tyrosine 118 contributes to the substrate binding site.

The protein belongs to the tRNA pseudouridine synthase TruA family. As to quaternary structure, homodimer.

It catalyses the reaction uridine(38/39/40) in tRNA = pseudouridine(38/39/40) in tRNA. Functionally, formation of pseudouridine at positions 38, 39 and 40 in the anticodon stem and loop of transfer RNAs. The polypeptide is tRNA pseudouridine synthase A (Rippkaea orientalis (strain PCC 8801 / RF-1) (Cyanothece sp. (strain PCC 8801))).